A 445-amino-acid chain; its full sequence is Bifunctional protein GlmU (445 aa).

The pyrophosphorylase stretch occupies residues 1 to 218 (MRALVLAAGK…LLEITGVNTR (218 aa)). Residues 6-9 (LAAG), lysine 20, glutamine 69, 74-75 (GT), 96-98 (YGD), glycine 134, glutamate 147, asparagine 162, and asparagine 216 contribute to the UDP-N-acetyl-alpha-D-glucosamine site. Aspartate 98 is a binding site for Mg(2+). Asparagine 216 is a binding site for Mg(2+). A linker region spans residues 219 to 239 (KTLVWLEEQLRMRKIEELLEN). Positions 240-445 (GVTILDPATT…GWVLKKRKEE (206 aa)) are N-acetyltransferase. Residues arginine 321 and lysine 339 each coordinate UDP-N-acetyl-alpha-D-glucosamine. The active-site Proton acceptor is histidine 351. Residues tyrosine 354 and asparagine 365 each coordinate UDP-N-acetyl-alpha-D-glucosamine. Acetyl-CoA-binding positions include alanine 368, 374 to 375 (NY), serine 393, alanine 411, and arginine 428.

It in the N-terminal section; belongs to the N-acetylglucosamine-1-phosphate uridyltransferase family. In the C-terminal section; belongs to the transferase hexapeptide repeat family. As to quaternary structure, homotrimer. Mg(2+) serves as cofactor.

Its subcellular location is the cytoplasm. It catalyses the reaction alpha-D-glucosamine 1-phosphate + acetyl-CoA = N-acetyl-alpha-D-glucosamine 1-phosphate + CoA + H(+). It carries out the reaction N-acetyl-alpha-D-glucosamine 1-phosphate + UTP + H(+) = UDP-N-acetyl-alpha-D-glucosamine + diphosphate. It functions in the pathway nucleotide-sugar biosynthesis; UDP-N-acetyl-alpha-D-glucosamine biosynthesis; N-acetyl-alpha-D-glucosamine 1-phosphate from alpha-D-glucosamine 6-phosphate (route II): step 2/2. Its pathway is nucleotide-sugar biosynthesis; UDP-N-acetyl-alpha-D-glucosamine biosynthesis; UDP-N-acetyl-alpha-D-glucosamine from N-acetyl-alpha-D-glucosamine 1-phosphate: step 1/1. The protein operates within bacterial outer membrane biogenesis; LPS lipid A biosynthesis. Catalyzes the last two sequential reactions in the de novo biosynthetic pathway for UDP-N-acetylglucosamine (UDP-GlcNAc). The C-terminal domain catalyzes the transfer of acetyl group from acetyl coenzyme A to glucosamine-1-phosphate (GlcN-1-P) to produce N-acetylglucosamine-1-phosphate (GlcNAc-1-P), which is converted into UDP-GlcNAc by the transfer of uridine 5-monophosphate (from uridine 5-triphosphate), a reaction catalyzed by the N-terminal domain. This is Bifunctional protein GlmU from Thermotoga petrophila (strain ATCC BAA-488 / DSM 13995 / JCM 10881 / RKU-1).